We begin with the raw amino-acid sequence, 141 residues long: Hemoglobin subunit alpha (141 aa).

The Globin domain occupies Val-1–Arg-141. Position 3 is a phosphoserine (Ser-3). Lys-7 is subject to N6-succinyllysine. Thr-8 carries the post-translational modification Phosphothreonine. Position 11 is an N6-succinyllysine (Lys-11). Residue Lys-16 is modified to N6-acetyllysine; alternate. The residue at position 16 (Lys-16) is an N6-succinyllysine; alternate. Position 24 is a phosphotyrosine (Tyr-24). Ser-35 carries the phosphoserine modification. At Lys-40 the chain carries N6-succinyllysine. Ser-49 bears the Phosphoserine mark. Position 58 (His-58) interacts with O2. His-87 serves as a coordination point for heme b. A Phosphoserine modification is found at Ser-102. Thr-108 carries the post-translational modification Phosphothreonine. At Ser-124 the chain carries Phosphoserine. Phosphothreonine is present on residues Thr-134 and Thr-137. Residue Ser-138 is modified to Phosphoserine.

It belongs to the globin family. As to quaternary structure, heterotetramer of two alpha chains and two beta chains. As to expression, red blood cells.

Functionally, involved in oxygen transport from the lung to the various peripheral tissues. The sequence is that of Hemoglobin subunit alpha from Tamias merriami (Merriam's chipmunk).